A 169-amino-acid chain; its full sequence is Ribosome maturation factor RimM (169 aa).

The region spanning 94-168 is the PRC barrel domain; the sequence is EEGQYYYHQI…KVIVELLEGL (75 aa).

It belongs to the RimM family. As to quaternary structure, binds ribosomal protein uS19.

It localises to the cytoplasm. In terms of biological role, an accessory protein needed during the final step in the assembly of 30S ribosomal subunit, possibly for assembly of the head region. Essential for efficient processing of 16S rRNA. May be needed both before and after RbfA during the maturation of 16S rRNA. It has affinity for free ribosomal 30S subunits but not for 70S ribosomes. The polypeptide is Ribosome maturation factor RimM (Limosilactobacillus fermentum (strain NBRC 3956 / LMG 18251) (Lactobacillus fermentum)).